Here is a 544-residue protein sequence, read N- to C-terminus: Zinc finger and BTB domain-containing protein 7B (544 aa).

The BTB domain occupies 34-115; sequence CDLTIRTQGL…AYTATLTTSS (82 aa). Serine 150 carries the post-translational modification Phosphoserine. 2 disordered regions span residues 171 to 221 and 244 to 314; these read TTAS…ARAN and GRLG…EDPI. The span at 186–200 shows a compositional bias: pro residues; the sequence is PQVPLLPPPPPPPRP. The segment covering 201-210 has biased composition (basic residues); that stretch reads VARRSRKPRK. N6-acetyllysine; by EP300; alternate is present on residues lysine 210 and lysine 216. Residues lysine 210 and lysine 216 each participate in a glycyl lysine isopeptide (Lys-Gly) (interchain with G-Cter in ubiquitin); alternate cross-link. A compositionally biased stretch (acidic residues) spans 277-286; the sequence is FEGEEEEEEM. An N6-acetyllysine; by EP300; alternate modification is found at lysine 339. Residue lysine 339 forms a Glycyl lysine isopeptide (Lys-Gly) (interchain with G-Cter in ubiquitin); alternate linkage. The segment at 348 to 404 is required for interaction with and acetylation by EP300; that stretch reads MPQECPVCHKIIHGAGKLPRHMRTHTGEKPFACEVCGVRFTRNDKLKIHMRKHTGER. A C2H2-type 1 zinc finger spans residues 350–372; the sequence is QECPVCHKIIHGAGKLPRHMRTH. Position 373 is a phosphothreonine (threonine 373). C2H2-type zinc fingers lie at residues 378 to 400 and 406 to 428; these read FACE…MRKH and YSCP…MHLH. The C2H2-type 4; atypical zinc-finger motif lies at 434–458; sequence YECHLCHKAFAKEDHLQRHLKGQNC. Disordered regions lie at residues 465–493 and 507–544; these read RRRK…DLSN and WEQS…MESS. 2 stretches are compositionally biased toward low complexity: residues 511 to 522 and 531 to 544; these read ATTGPPVTTQGP and TPTT…MESS.

In terms of assembly, homodimerizes. Interacts with NCL, NEDD4 and YBX1. Interacts with HNRNPU (via RNA-binding RGG-box region); the interaction facilitates the recruitment of long non-coding RNA Blnc1 by ZBTB7B. Interacts with HDAC4 and HDAC5; the interaction allows the recruitment of HDAC4 and HDAC5 on CD8 loci for deacetylation and possible inhibition of CD8 genes expression. Acetylated directly and specifically by EP300. EP300-mediated acetylation of Lys-210, Lys-216 and Lys-339 stabilizes the protein by antagonizing ubiquitin conjugation. Post-translationally, ubiquitinated, leading to proteasomal degradation. Competes with acetylation on Lys-210, Lys-216 and Lys-339. In terms of tissue distribution, widely expressed, with a higher level in skin. Expressed in thymus. Restricted to CD4 cells (mature single positive CD4(+) and intermediate CD4(+)CD8(+) cells). Expressed in the luminal epithelial cells in the mammary glands where is up-regulated at late pregnancy and lactation. Expression is enriched in brown fat.

The protein resides in the nucleus. Functionally, transcription regulator that acts as a key regulator of lineage commitment of immature T-cell precursors. Exerts distinct biological functions in the mammary epithelial cells and T cells in a tissue-specific manner. Necessary and sufficient for commitment of CD4 lineage, while its absence causes CD8 commitment. Development of immature T-cell precursors (thymocytes) to either the CD4 helper or CD8 killer T-cell lineages correlates precisely with their T-cell receptor specificity for major histocompatibility complex class II or class I molecules, respectively. Cross-antagonism between ZBTB7B and CBF complexes are determinative to CD4 versus CD8 cell fate decision. Suppresses RUNX3 expression and imposes CD4+ lineage fate by inducing the SOCS suppressors of cytokine signaling. induces, as a transcriptional activator, SOCS genes expression which represses RUNX3 expression and promotes the CD4+ lineage fate. During CD4 lineage commitment, associates with multiple sites at the CD8 locus, acting as a negative regulator of the CD8 promoter and enhancers by epigenetic silencing through the recruitment of class II histone deacetylases, such as HDAC4 and HDAC5, to these loci. Regulates the development of IL17-producing CD1d-restricted naural killer (NK) T cells. Also functions as an important metabolic regulator in the lactating mammary glands. Critical feed-forward regulator of insulin signaling in mammary gland lactation, directly regulates expression of insulin receptor substrate-1 (IRS-1) and insulin-induced Akt-mTOR-SREBP signaling. Transcriptional repressor of the collagen COL1A1 and COL1A2 genes. May also function as a repressor of fibronectin and possibly other extracellular matrix genes. Potent driver of brown fat development, thermogenesis and cold-induced beige fat formation. Recruits the brown fat lncRNA 1 (Blnc1):HNRNPU ribonucleoprotein complex to activate thermogenic gene expression in brown and beige adipocytes. The polypeptide is Zinc finger and BTB domain-containing protein 7B (Mus musculus (Mouse)).